We begin with the raw amino-acid sequence, 282 residues long: Parvulin-like PPIase (282 aa).

Residues 1–20 (MKKLSVIFLSVSMLSSIAFG) form the signal peptide. A PpiC domain is found at 138 to 231 (KEQIKVAHIL…FGWHIIKVLE (94 aa)).

The protein belongs to the PpiC/parvulin rotamase family.

It is found in the cell outer membrane. The enzyme catalyses [protein]-peptidylproline (omega=180) = [protein]-peptidylproline (omega=0). The sequence is that of Parvulin-like PPIase (plp) from Rickettsia prowazekii (strain Madrid E).